The primary structure comprises 371 residues: Bifunctional enzyme IspD/IspF (371 aa).

Residues 1–212 (MKDITLVLLA…FDFTPASGTI (212 aa)) are 2-C-methyl-D-erythritol 4-phosphate cytidylyltransferase. The 2-C-methyl-D-erythritol 2,4-cyclodiphosphate synthase stretch occupies residues 213 to 371 (FTGNGFDVHA…NLGYFDWRKF (159 aa)). Positions 219 and 221 each coordinate a divalent metal cation. 4-CDP-2-C-methyl-D-erythritol 2-phosphate-binding positions include 219–221 (DVH) and 245–246 (HS). His253 contributes to the a divalent metal cation binding site. Residues 267-269 (DIG), 272-276 (FPDTD), 341-344 (STTE), Phe348, and Arg351 contribute to the 4-CDP-2-C-methyl-D-erythritol 2-phosphate site.

The protein in the N-terminal section; belongs to the IspD/TarI cytidylyltransferase family. IspD subfamily. It in the C-terminal section; belongs to the IspF family. A divalent metal cation serves as cofactor.

It catalyses the reaction 2-C-methyl-D-erythritol 4-phosphate + CTP + H(+) = 4-CDP-2-C-methyl-D-erythritol + diphosphate. The enzyme catalyses 4-CDP-2-C-methyl-D-erythritol 2-phosphate = 2-C-methyl-D-erythritol 2,4-cyclic diphosphate + CMP. The protein operates within isoprenoid biosynthesis; isopentenyl diphosphate biosynthesis via DXP pathway; isopentenyl diphosphate from 1-deoxy-D-xylulose 5-phosphate: step 2/6. Its pathway is isoprenoid biosynthesis; isopentenyl diphosphate biosynthesis via DXP pathway; isopentenyl diphosphate from 1-deoxy-D-xylulose 5-phosphate: step 4/6. In terms of biological role, bifunctional enzyme that catalyzes the formation of 4-diphosphocytidyl-2-C-methyl-D-erythritol from CTP and 2-C-methyl-D-erythritol 4-phosphate (MEP) (IspD), and catalyzes the conversion of 4-diphosphocytidyl-2-C-methyl-D-erythritol 2-phosphate (CDP-ME2P) to 2-C-methyl-D-erythritol 2,4-cyclodiphosphate (ME-CPP) with a corresponding release of cytidine 5-monophosphate (CMP) (IspF). The sequence is that of Bifunctional enzyme IspD/IspF from Campylobacter hominis (strain ATCC BAA-381 / DSM 21671 / CCUG 45161 / LMG 19568 / NCTC 13146 / CH001A).